Consider the following 308-residue polypeptide: tRNA dimethylallyltransferase (308 aa).

9-16 (GPTAVGKT) contributes to the ATP binding site. Substrate is bound at residue 11-16 (TAVGKT). Positions 34–37 (DSMQ) are interaction with substrate tRNA.

It belongs to the IPP transferase family. As to quaternary structure, monomer. The cofactor is Mg(2+).

It carries out the reaction adenosine(37) in tRNA + dimethylallyl diphosphate = N(6)-dimethylallyladenosine(37) in tRNA + diphosphate. Catalyzes the transfer of a dimethylallyl group onto the adenine at position 37 in tRNAs that read codons beginning with uridine, leading to the formation of N6-(dimethylallyl)adenosine (i(6)A). The polypeptide is tRNA dimethylallyltransferase (Lactobacillus delbrueckii subsp. bulgaricus (strain ATCC BAA-365 / Lb-18)).